The following is a 267-amino-acid chain: 3-isopropylmalate dehydratase large subunit (267 aa).

Cysteine 146, cysteine 206, and cysteine 209 together coordinate [4Fe-4S] cluster.

It belongs to the aconitase/IPM isomerase family. LeuC type 1 subfamily. In terms of assembly, heterodimer of LeuC and LeuD. Requires [4Fe-4S] cluster as cofactor.

It catalyses the reaction (2R,3S)-3-isopropylmalate = (2S)-2-isopropylmalate. It participates in amino-acid biosynthesis; L-leucine biosynthesis; L-leucine from 3-methyl-2-oxobutanoate: step 2/4. In terms of biological role, catalyzes the isomerization between 2-isopropylmalate and 3-isopropylmalate, via the formation of 2-isopropylmaleate. This Cupriavidus necator (Alcaligenes eutrophus) protein is 3-isopropylmalate dehydratase large subunit (leuC).